A 693-amino-acid polypeptide reads, in one-letter code: Elongation factor G (693 aa).

In terms of domain architecture, tr-type G spans 8–283 (NKVRNFGIAA…AVCDYLPSPL (276 aa)). GTP contacts are provided by residues 17–24 (AHIDAGKT), 81–85 (DTPGH), and 135–138 (NKMD).

It belongs to the TRAFAC class translation factor GTPase superfamily. Classic translation factor GTPase family. EF-G/EF-2 subfamily.

The protein localises to the cytoplasm. Its function is as follows. Catalyzes the GTP-dependent ribosomal translocation step during translation elongation. During this step, the ribosome changes from the pre-translocational (PRE) to the post-translocational (POST) state as the newly formed A-site-bound peptidyl-tRNA and P-site-bound deacylated tRNA move to the P and E sites, respectively. Catalyzes the coordinated movement of the two tRNA molecules, the mRNA and conformational changes in the ribosome. This is Elongation factor G from Endomicrobium trichonymphae.